The chain runs to 180 residues: Zinc finger protein 740 (180 aa).

Over residues 1-11 (MMLSQIASKQA) the composition is skewed to polar residues. The segment at 1 to 62 (MMLSQIASKQ…KEDDSLAEAS (62 aa)) is disordered. Lys9 participates in a covalent cross-link: Glycyl lysine isopeptide (Lys-Gly) (interchain with G-Cter in SUMO2). A Phosphoserine modification is found at Ser19. Basic and acidic residues predominate over residues 31 to 56 (CKPRFDLSSKGHRKDSDKSRNRKEDD). C2H2-type zinc fingers lie at residues 88-110 (FICE…VLIH) and 116-138 (FECD…KRVH). The segment at 144–166 (YQCERCHQCFSRTDRLLRHKRMC) adopts a C2H2-type 3; atypical zinc-finger fold.

It belongs to the krueppel C2H2-type zinc-finger protein family.

The protein resides in the nucleus. In terms of biological role, may be involved in transcriptional regulation. This chain is Zinc finger protein 740 (Znf740), found in Mus musculus (Mouse).